The primary structure comprises 434 residues: V-type ATP synthase beta chain (434 aa).

This sequence belongs to the ATPase alpha/beta chains family.

Produces ATP from ADP in the presence of a proton gradient across the membrane. The V-type beta chain is a regulatory subunit. The sequence is that of V-type ATP synthase beta chain (atpB) from Borreliella burgdorferi (strain ATCC 35210 / DSM 4680 / CIP 102532 / B31) (Borrelia burgdorferi).